The sequence spans 282 residues: F-actin-capping protein subunit alpha (282 aa).

The protein belongs to the F-actin-capping protein alpha subunit family. Component of the F-actin capping complex, composed of a heterodimer of an alpha and a beta subunit.

The protein localises to the cytoplasm. It is found in the cytoskeleton. In terms of biological role, F-actin-capping proteins bind in a Ca(2+)-independent manner to the fast growing ends of actin filaments (barbed end) thereby blocking the exchange of subunits at these ends. Unlike other capping proteins (such as gelsolin and severin), these proteins do not sever actin filaments. The chain is F-actin-capping protein subunit alpha (cap-1) from Caenorhabditis elegans.